A 922-amino-acid polypeptide reads, in one-letter code: MRFSLCGFPLVFSFTLLSVFDTSLSATTISLTPEDSFHGDSQNAERSYNVQAGDVYSLTGDVSISNVDNSALNKACFNVTSGSVTFAGNHHGLYFNNISSGTTKEGAVLCCQDPQATARFSGFSTLSFIQSPGDIKEQGCLYSKNALMLLNNYVVRFEQNQSKTKGGAISGANVTIVGNYDSVSFYQNAATFGGAIHSSGPLQIAVNQAEIRFAQNTAKNGSGGALYSDGDIDIDQNAYVLFRENEALTTAIGKGGAVCCLPTSGSSTPVPIVTFSDNKQLVFERNHSIMGGGAIYARKLSISSGGPTLFINNISYANSQNLGGAIAIDTGGEISLSAEKGTITFQGNRTSLPFLNGIHLLQNAKFLKLQARNGYSIEFYDPITSEADGSTQLNINGDPKNKEYTGTILFSGEKSLANDPRDFKSTIPQNVNLSAGYLVIKEGAEVTVSKFTQSPGSHLVLDLGTKLIASKEDIAITGLAIDIDSLSSSSTAAVIKANTANKQISVTDSIELISPTGNAYEDLRMRNSQTFPLLSLEPGAGGSVTVTAGDFLPVSPHYGFQGNWKLAWTGTGNKVGEFFWDKINYKPRPEKEGNLVPNILWGNAVDVRSLMQVQETHASSLQTDRGLWIDGIGNFFHVSASEDNIRYRHNSGGYVLSVNNEITPKHYTSMAFSQLFSRDKDYAVSNNEYRMYLGSYLYQYTTSLGNIFRYASRNPNVNVGILSRRFLQNPLMIFHFLCAYGHATNDMKTDYANFPMVKNSWRNNCWAIECGGSMPLLVFENGRLFQGAIPFMKLQLVYAYQGDFKETTADGRRFSNGSLTSISVPLGIRFEKLALSQDVLYDFSFSYIPDIFRKDPSCEAALVISGDSWLVPAAHVSRHAFVGSGTGRYHFNDYTELLCRGSIECRPHARNYNINCGSKFRF.

The N-terminal stretch at 1–26 is a signal peptide; sequence MRFSLCGFPLVFSFTLLSVFDTSLSA. Residues 620-922 enclose the Autotransporter domain; it reads SLQTDRGLWI…NINCGSKFRF (303 aa).

Belongs to the PMP outer membrane protein family.

Its subcellular location is the secreted. The protein resides in the cell wall. It is found in the cell outer membrane. The sequence is that of Probable outer membrane protein pmp1 (pmp1) from Chlamydia pneumoniae (Chlamydophila pneumoniae).